Consider the following 265-residue polypeptide: MKPTILLYDSGMGGLTVYDEIRKKLPNAHYLYYFDNACFPYSEKPTEVLVERATKMVQKMAKNYPLDLVVVACNTASTVVLPTLRKIFPFPIVGTVPAIKPAAALSQTKTIGLLATKGTITRPYVLSLIEQYAPNCQIEKIGSTALVELVEQKLQTGVIDLTRLTPIIADWQNHPTLDTVILGCTHFPMAKTELQQLLPNVKYFLDSGNAIANRVTHLIMHSPHNQQLEKQRENLAFCTQQNNQFKQQAKIMQRWGFPQLNTLMI.

Residues 9–10 (DS) and 41–42 (YS) contribute to the substrate site. C73 acts as the Proton donor/acceptor in catalysis. 74–75 (NT) serves as a coordination point for substrate. C184 (proton donor/acceptor) is an active-site residue. 185-186 (TH) is a substrate binding site.

The protein belongs to the aspartate/glutamate racemases family.

It carries out the reaction L-glutamate = D-glutamate. Its pathway is cell wall biogenesis; peptidoglycan biosynthesis. Functionally, provides the (R)-glutamate required for cell wall biosynthesis. The protein is Glutamate racemase of Haemophilus ducreyi (strain 35000HP / ATCC 700724).